We begin with the raw amino-acid sequence, 436 residues long: Serine hydroxymethyltransferase (436 aa).

(6S)-5,6,7,8-tetrahydrofolate-binding positions include Leu-133 and 137-139 (GHI). At Lys-242 the chain carries N6-(pyridoxal phosphate)lysine.

This sequence belongs to the SHMT family. In terms of assembly, homodimer. Pyridoxal 5'-phosphate is required as a cofactor.

It localises to the cytoplasm. It catalyses the reaction (6R)-5,10-methylene-5,6,7,8-tetrahydrofolate + glycine + H2O = (6S)-5,6,7,8-tetrahydrofolate + L-serine. It functions in the pathway one-carbon metabolism; tetrahydrofolate interconversion. It participates in amino-acid biosynthesis; glycine biosynthesis; glycine from L-serine: step 1/1. Catalyzes the reversible interconversion of serine and glycine with tetrahydrofolate (THF) serving as the one-carbon carrier. This reaction serves as the major source of one-carbon groups required for the biosynthesis of purines, thymidylate, methionine, and other important biomolecules. Also exhibits THF-independent aldolase activity toward beta-hydroxyamino acids, producing glycine and aldehydes, via a retro-aldol mechanism. The sequence is that of Serine hydroxymethyltransferase from Pelagibacter ubique (strain HTCC1062).